Here is a 974-residue protein sequence, read N- to C-terminus: Ovochymase-2 (974 aa).

Residues 1–21 (MAETSIFPIMMLTVMIGVGRG) form the signal peptide. The propeptide at 22–49 (VTDSPGRVSRCGERPAANTSVSYGLLSR) is activation peptide. Residue Asn-39 is glycosylated (N-linked (GlcNAc...) asparagine). Residues 50–299 (IVGGTSAVKG…LLNWLSENLN (250 aa)) form the Peptidase S1 1 domain. The cysteines at positions 75 and 91 are disulfide-linked. His-90 (charge relay system) is an active-site residue. 2 residues coordinate Ca(2+): Val-112 and Glu-117. The Charge relay system role is filled by Asp-140. Cystine bridges form between Cys-174–Cys-244, Cys-205–Cys-223, Cys-234–Cys-263, Cys-312–Cys-342, Cys-369–Cys-388, Cys-435–Cys-462, Cys-489–Cys-510, Cys-615–Cys-631, Cys-713–Cys-776, Cys-741–Cys-754, and Cys-766–Cys-795. Residue Ser-238 is the Charge relay system of the active site. CUB domains are found at residues 312–425 (CSTN…YEAV) and 435–547 (CGSV…ISFV). The region spanning 590 to 819 (LIKAEEAMPN…FIPWIMETIL (230 aa)) is the Peptidase S1 2 domain. The propeptide at 590 to 974 (LIKAEEAMPN…WLSYSFHNQN (385 aa)) is activation peptide. N-linked (GlcNAc...) asparagine glycosylation is present at Asn-763. Residues 830–858 (EPHHPLFPPDKPSQQKALLPDSPPSSSSQ) form a disordered region. A glycan (N-linked (GlcNAc...) asparagine) is linked at Asn-926.

This sequence belongs to the peptidase S1 family. The catalytically inactive 107 kDa form is processed both N- and C-terminally to give rise to the 66 kDa catalytically active form and inactive forms of 82 kDa and 59 kDa. As to expression, expressed specifically in the cells lining the bottom of epithelial folds in the oviductal pars recta.

The protein localises to the secreted. The catalysed reaction is Preferential cleavage at 371-Gly-Ser-Arg-|-Trp-374 of glycoprotein gp43 in Xenopus laevis coelemic egg envelope to yield gp41.. Its function is as follows. Mediates gamete interaction by affecting the vitelline coat. In Bufo japonicus (Japanese common toad), this protein is Ovochymase-2 (OVCH2).